Reading from the N-terminus, the 835-residue chain is Protein translocase subunit SecA (835 aa).

ATP contacts are provided by residues Gln-85, 103-107, and Asp-492; that span reads GEGKT. The segment at 788–807 is disordered; it reads VQGEAVHPSSDGEEAKKKPV. Positions 819, 821, 830, and 831 each coordinate Zn(2+).

This sequence belongs to the SecA family. As to quaternary structure, monomer and homodimer. Part of the essential Sec protein translocation apparatus which comprises SecA, SecYEG and auxiliary proteins SecDF. Other proteins may also be involved. It depends on Zn(2+) as a cofactor.

It is found in the cell membrane. The protein resides in the cytoplasm. The enzyme catalyses ATP + H2O + cellular proteinSide 1 = ADP + phosphate + cellular proteinSide 2.. Part of the Sec protein translocase complex. Interacts with the SecYEG preprotein conducting channel. Has a central role in coupling the hydrolysis of ATP to the transfer of proteins into and across the cell membrane, serving as an ATP-driven molecular motor driving the stepwise translocation of polypeptide chains across the membrane. In Bacillus cereus (strain B4264), this protein is Protein translocase subunit SecA.